We begin with the raw amino-acid sequence, 302 residues long: Probable WRKY transcription factor 40 (302 aa).

The WRKY DNA-binding region spans 140 to 206; that stretch reads DTTLVVKDGY…YEGEHNHPMP (67 aa).

The protein belongs to the WRKY group III family.

Its subcellular location is the nucleus. Transcription factor. Interacts specifically with the W box (5'-(T)TGAC[CT]-3'), a frequently occurring elicitor-responsive cis-acting element. This is Probable WRKY transcription factor 40 from Arabidopsis thaliana (Mouse-ear cress).